A 152-amino-acid polypeptide reads, in one-letter code: 3-hydroxyacyl-[acyl-carrier-protein] dehydratase FabZ (152 aa).

His-57 is a catalytic residue.

It belongs to the thioester dehydratase family. FabZ subfamily.

The protein resides in the cytoplasm. The enzyme catalyses a (3R)-hydroxyacyl-[ACP] = a (2E)-enoyl-[ACP] + H2O. In terms of biological role, involved in unsaturated fatty acids biosynthesis. Catalyzes the dehydration of short chain beta-hydroxyacyl-ACPs and long chain saturated and unsaturated beta-hydroxyacyl-ACPs. This is 3-hydroxyacyl-[acyl-carrier-protein] dehydratase FabZ from Xanthomonas axonopodis pv. citri (strain 306).